A 405-amino-acid polypeptide reads, in one-letter code: Indoleamine 2,3-dioxygenase 2 (405 aa).

Heme is bound at residue His-347.

This sequence belongs to the indoleamine 2,3-dioxygenase family. It depends on heme as a cofactor. Expressed mainly in antigen-presenting immune cells, liver, kidney, brain, and placenta. Highly expressed in kidney, followed by epididymis and liver (at protein level). Detected in the tails of the spermatozoa in the testis and in the kidney tubules (at protein level). Constitutively expressed in brain.

The enzyme catalyses L-tryptophan + O2 = N-formyl-L-kynurenine. The protein operates within amino-acid degradation; L-tryptophan degradation via kynurenine pathway; L-kynurenine from L-tryptophan: step 1/2. Activity is inhibited by D-1MT (1-methyl-D-tryptophan) and MTH-trp (methylthiohydantoin-DL-tryptophan) but not L-1MT (1-methyl-L-tryptophan). In terms of biological role, catalyzes the first and rate-limiting step in the kynurenine pathway of tryptophan catabolism. Involved in immune regulation. This is Indoleamine 2,3-dioxygenase 2 from Mus musculus (Mouse).